Here is a 501-residue protein sequence, read N- to C-terminus: Beta-secretase 1 (501 aa).

The N-terminal stretch at 1 to 21 (MAPALRWLLLWVGSGMLPAQG) is a signal peptide. Residues 22 to 45 (THLGIRLPLRSGLAGPPLGLRLPR) constitute a propeptide that is removed on maturation. The Extracellular portion of the chain corresponds to 22-457 (THLGIRLPLR…PQTDESTLMT (436 aa)). The region spanning 75 to 416 (YYVEMTVGSP…DRARKRIGFA (342 aa)) is the Peptidase A1 domain. Asp-93 is an active-site residue. Lys-126 is subject to N6-acetyllysine. Residues Asn-153, Asn-172, and Asn-223 are each glycosylated (N-linked (GlcNAc...) asparagine). 3 disulfides stabilise this stretch: Cys-216/Cys-420, Cys-278/Cys-443, and Cys-330/Cys-380. Lys-275, Lys-279, and Lys-285 each carry N6-acetyllysine. Asp-289 is a catalytic residue. 3 positions are modified to N6-acetyllysine: Lys-299, Lys-300, and Lys-307. Residue Asn-354 is glycosylated (N-linked (GlcNAc...) asparagine). Residues 458 to 478 (IAYVMAAICALFMLPLCLMVC) form a helical membrane-spanning segment. 4 S-palmitoyl cysteine lipidation sites follow: Cys-474, Cys-478, Cys-482, and Cys-485. Residues 479–501 (QWRCLRCLRHQHDDFADDISLLK) are Cytoplasmic-facing. An interaction with RTN3 region spans residues 479-501 (QWRCLRCLRHQHDDFADDISLLK). Residues 496 to 500 (DISLL) carry the DXXLL motif. Ser-498 is modified (phosphoserine). A Glycyl lysine isopeptide (Lys-Gly) (interchain with G-Cter in ubiquitin) cross-link involves residue Lys-501.

This sequence belongs to the peptidase A1 family. As to quaternary structure, monomer. Interacts (via DXXLL motif) with GGA1, GGA2 and GGA3 (via their VHS domain); the interaction highly increases when BACE1 is phosphorylated at Ser-498. Interacts with RTN1; RTN2; RTN3 and RTN4; the interaction leads to inhibition of amyloid precursor protein processing. Interacts with SNX6. Interacts with PCSK9. Interacts with NAT8 and NAT8B. Interacts with BIN1. Interacts (via extracellular domain) with ADAM10 (via extracellular domain). Interacts with SORL1; this interaction may affect binding with APP and hence reduce APP cleavage. Interacts with NRDC AND NRG1. In terms of processing, palmitoylation mediates lipid raft localization. Post-translationally, acetylated in the endoplasmic reticulum at Lys-126, Lys-275, Lys-279, Lys-285, Lys-299, Lys-300 and Lys-307. Acetylation by NAT8 and NAT8B is transient and deacetylation probably occurs in the Golgi. Acetylation regulates the maturation, the transport to the plasma membrane, the stability and the expression of the protein. Ubiquitinated at Lys-501, ubiquitination leads to lysosomal degradation. Monoubiquitinated and 'Lys-63'-linked polyubitinated. Deubiquitnated by USP8; inhibits lysosomal degradation. In terms of processing, phosphorylation at Ser-498 is required for interaction with GGA1 and retrograded transport from endosomal compartments to the trans-Golgi network. Non-phosphorylated BACE1 enters a direct recycling route to the cell surface. Post-translationally, N-Glycosylated. Addition of a bisecting N-acetylglucosamine by MGAT3 blocks lysosomal targeting, further degradation and is required for maintaining stability under stress conditions.

It is found in the cell membrane. Its subcellular location is the golgi apparatus. The protein resides in the trans-Golgi network. It localises to the endoplasmic reticulum. The protein localises to the endosome. It is found in the cell surface. Its subcellular location is the cytoplasmic vesicle membrane. The protein resides in the membrane raft. It localises to the lysosome. The protein localises to the late endosome. It is found in the early endosome. Its subcellular location is the recycling endosome. The protein resides in the cell projection. It localises to the axon. The protein localises to the dendrite. The enzyme catalyses Broad endopeptidase specificity. Cleaves Glu-Val-Asn-Leu-|-Asp-Ala-Glu-Phe in the Swedish variant of Alzheimer's amyloid precursor protein.. Inhibited by RTN3 and RTN4. Functionally, responsible for the proteolytic processing of the amyloid precursor protein (APP). Cleaves at the N-terminus of the A-beta peptide sequence, between residues 671 and 672 of APP, leads to the generation and extracellular release of beta-cleaved soluble APP, and a corresponding cell-associated C-terminal fragment which is later released by gamma-secretase. Cleaves CHL1. This chain is Beta-secretase 1 (Bace1), found in Rattus norvegicus (Rat).